Reading from the N-terminus, the 413-residue chain is Putative tRNA pseudouridine synthase C16C4.06c (413 aa).

The active-site Nucleophile is Asp-96. Tyr-154 lines the substrate pocket.

This sequence belongs to the tRNA pseudouridine synthase TruA family.

It is found in the cytoplasm. Its subcellular location is the nucleus. The catalysed reaction is a uridine in tRNA = a pseudouridine in tRNA. This chain is Putative tRNA pseudouridine synthase C16C4.06c, found in Schizosaccharomyces pombe (strain 972 / ATCC 24843) (Fission yeast).